A 404-amino-acid chain; its full sequence is Argininosuccinate synthase (404 aa).

9–17 (AYSGGLDTS) lines the ATP pocket. Tyr-86 contributes to the L-citrulline binding site. ATP is bound at residue Gly-116. L-aspartate is bound by residues Thr-118, Asn-122, and Asp-123. Residue Asn-122 participates in L-citrulline binding. L-citrulline-binding residues include Arg-126, Ser-174, Ser-183, Glu-259, and Tyr-271.

This sequence belongs to the argininosuccinate synthase family. Type 1 subfamily. In terms of assembly, homotetramer.

It localises to the cytoplasm. The enzyme catalyses L-citrulline + L-aspartate + ATP = 2-(N(omega)-L-arginino)succinate + AMP + diphosphate + H(+). It functions in the pathway amino-acid biosynthesis; L-arginine biosynthesis; L-arginine from L-ornithine and carbamoyl phosphate: step 2/3. The sequence is that of Argininosuccinate synthase from Listeria welshimeri serovar 6b (strain ATCC 35897 / DSM 20650 / CCUG 15529 / CIP 8149 / NCTC 11857 / SLCC 5334 / V8).